A 440-amino-acid chain; its full sequence is Ferredoxin--NADP reductase (440 aa).

The CpcD-like domain maps to 17 to 75 (SRVFVYEVVGMRQNEETDQTNYPIRKSGSVFIRVPYNRMNQEMQRITRLGGKIVSIQTV). Residues 93–142 (ASSETAKSEGNGKATPVKTDSGAKGFAKPPAEEQLKKKDNKGNTMTQAKA) are disordered. Positions 122-133 (PAEEQLKKKDNK) are enriched in basic and acidic residues. The region spanning 155-279 (NAPFIGKVIS…TGPVGKEMLL (125 aa)) is the FAD-binding FR-type domain. FAD contacts are provided by residues 214–217 (RLYS), 235–237 (CVR), tyrosine 241, 253–255 (VCS), and threonine 294. Residues serine 217 and arginine 237 each coordinate NADP(+). NADP(+) contacts are provided by residues threonine 294, 330–331 (VP), 360–361 (SR), 370–374 (RMYIQ), 399–400 (GL), and glutamate 438.

The protein belongs to the ferredoxin--NADP reductase type 1 family. FAD is required as a cofactor.

The protein resides in the cellular thylakoid membrane. The catalysed reaction is 2 reduced [2Fe-2S]-[ferredoxin] + NADP(+) + H(+) = 2 oxidized [2Fe-2S]-[ferredoxin] + NADPH. In Trichormus variabilis (strain ATCC 29413 / PCC 7937) (Anabaena variabilis), this protein is Ferredoxin--NADP reductase (petH).